The chain runs to 212 residues: Sclerostin (212 aa).

The N-terminal stretch at methionine 1–glycine 23 is a signal peptide. Asparagine 52 is a glycosylation site (N-linked (GlcNAc...) asparagine). 4 cysteine pairs are disulfide-bonded: cysteine 79–cysteine 133, cysteine 93–cysteine 147, cysteine 104–cysteine 164, and cysteine 108–cysteine 166. Residues glutamate 81 to arginine 171 form the CTCK domain. N-linked (GlcNAc...) asparagine glycosylation occurs at asparagine 174. Positions lysine 179–tyrosine 212 are disordered. Residues threonine 190 to lysine 202 show a composition bias toward basic residues.

This sequence belongs to the sclerostin family. Interacts with LRP4 (via the extracellular domain); the interaction facilitates the inhibition of Wnt signaling. Interacts with LRP5 (via the first two YWTD-EGF repeat domains); the interaction inhibits Wnt-mediated signaling. Interacts with LRP6.

Its subcellular location is the secreted. It is found in the extracellular space. It localises to the extracellular matrix. Functionally, negative regulator of bone growth that acts through inhibition of Wnt signaling and bone formation. In Bos taurus (Bovine), this protein is Sclerostin.